A 162-amino-acid polypeptide reads, in one-letter code: MNIPFRVGQGFDVHALVEGRPLIIGGVTIAHTHGLLGHSDADVLLHAVTDALLGGAGLGDIGRHFPDTDQAYRGADSRVLLRAAFDKVRAAGWAPVNVDATIHAQAPKIGPHAAAMVANIAADLALDAGAVNIKAKTNEGLGYLGRKEGIAANVVVLLARAG.

Residues D12 and H14 each contribute to the a divalent metal cation site. 4-CDP-2-C-methyl-D-erythritol 2-phosphate is bound by residues 12 to 14 and 38 to 39; these read DVH and HS. H46 serves as a coordination point for a divalent metal cation. 4-CDP-2-C-methyl-D-erythritol 2-phosphate is bound by residues 60–62, 65–69, and R146; these read DIG and FPDTD.

It belongs to the IspF family. In terms of assembly, homotrimer. Requires a divalent metal cation as cofactor.

The enzyme catalyses 4-CDP-2-C-methyl-D-erythritol 2-phosphate = 2-C-methyl-D-erythritol 2,4-cyclic diphosphate + CMP. Its pathway is isoprenoid biosynthesis; isopentenyl diphosphate biosynthesis via DXP pathway; isopentenyl diphosphate from 1-deoxy-D-xylulose 5-phosphate: step 4/6. In terms of biological role, involved in the biosynthesis of isopentenyl diphosphate (IPP) and dimethylallyl diphosphate (DMAPP), two major building blocks of isoprenoid compounds. Catalyzes the conversion of 4-diphosphocytidyl-2-C-methyl-D-erythritol 2-phosphate (CDP-ME2P) to 2-C-methyl-D-erythritol 2,4-cyclodiphosphate (ME-CPP) with a corresponding release of cytidine 5-monophosphate (CMP). This Bordetella bronchiseptica (strain ATCC BAA-588 / NCTC 13252 / RB50) (Alcaligenes bronchisepticus) protein is 2-C-methyl-D-erythritol 2,4-cyclodiphosphate synthase.